A 202-amino-acid chain; its full sequence is Glycerol-3-phosphate acyltransferase (202 aa).

Transmembrane regions (helical) follow at residues 2–22 (MIIV…GFVI), 54–74 (FLVT…PLWL), 85–105 (FFTN…YPVY), 120–140 (VVLG…FIIL), 141–161 (KIFK…VIGS), and 162–182 (LIIQ…ILII).

The protein belongs to the PlsY family. Probably interacts with PlsX.

It is found in the cell membrane. The catalysed reaction is an acyl phosphate + sn-glycerol 3-phosphate = a 1-acyl-sn-glycero-3-phosphate + phosphate. Its pathway is lipid metabolism; phospholipid metabolism. Catalyzes the transfer of an acyl group from acyl-phosphate (acyl-PO(4)) to glycerol-3-phosphate (G3P) to form lysophosphatidic acid (LPA). This enzyme utilizes acyl-phosphate as fatty acyl donor, but not acyl-CoA or acyl-ACP. This Staphylococcus aureus (strain bovine RF122 / ET3-1) protein is Glycerol-3-phosphate acyltransferase.